Reading from the N-terminus, the 387-residue chain is Probable multidrug resistance protein EmrK (387 aa).

Topologically, residues 1–16 (MEQINSNKKHSNRRKY) are cytoplasmic. The helical transmembrane segment at 17 to 37 (FSLLAVVLFIAFSGAYAYWSM) threads the bilayer. Topologically, residues 38-387 (ELEDMISTDD…SNIISHNGQL (350 aa)) are periplasmic.

This sequence belongs to the membrane fusion protein (MFP) (TC 8.A.1) family. In terms of assembly, part of the tripartite efflux system EmrYK-TolC, which is composed of an inner membrane transporter, EmrY, a membrane fusion protein, EmrK, and an outer membrane component, TolC. The complex forms a large protein conduit and can translocate molecules across both the inner and outer membranes.

The protein resides in the cell inner membrane. Part of the tripartite efflux system EmrYK-TolC, which confers resistance to various drugs. The protein is Probable multidrug resistance protein EmrK (emrK) of Escherichia coli (strain K12).